A 485-amino-acid chain; its full sequence is Protein disulfide-isomerase 1 (485 aa).

A signal peptide spans Met-1–Ala-20. Thioredoxin domains are found at residues Asp-21–Gly-130 and Tyr-342–Gly-470. 2 disulfides stabilise this stretch: Cys-52-Cys-55 and Cys-393-Cys-396. Residues Cys-393 and Cys-396 each act as nucleophile in the active site. A Prevents secretion from ER motif is present at residues His-482 to Leu-485.

This sequence belongs to the protein disulfide isomerase family.

Its subcellular location is the endoplasmic reticulum lumen. The enzyme catalyses Catalyzes the rearrangement of -S-S- bonds in proteins.. In Caenorhabditis elegans, this protein is Protein disulfide-isomerase 1 (pdi-1).